The following is a 1010-amino-acid chain: Plasma membrane ATPase 2 (1010 aa).

The segment covering 1 to 14 (MQRNNGEGRPEGMH) has biased composition (basic and acidic residues). Disordered regions lie at residues 1–126 (MQRN…EDED) and 139–165 (QDQE…PEEL). Over 1 to 201 (MQRNNGEGRP…KEEKTNNIKK (201 aa)) the chain is Cytoplasmic. Residues 25–34 (FKNNASPQDD) show a composition bias toward polar residues. The segment covering 42–52 (YEEGGVEDSAV) has biased composition (acidic residues). Residues 68–106 (APNTHAQQANLQSGNTSITHETQSTSRGQEATTSPSLSA) show a composition bias toward polar residues. Residues 140 to 151 (DQEEEQVEEEES) show a composition bias toward acidic residues. The helical transmembrane segment at 202–222 (FLSFFVGPIQFVMELAAALAA) threads the bilayer. Residues 223–226 (GLRD) are Extracellular-facing. Residues 227–246 (WVDFGVICALLLLNATVGFV) form a helical membrane-spanning segment. Residues 247–377 (QEYQAGSIVD…SQGHFTEVLN (131 aa)) are Cytoplasmic-facing. The helical transmembrane segment at 378-399 (GIGTILLVLVILTLLCIYTAAF) threads the bilayer. The Extracellular segment spans residues 400–410 (YRSVRLAALLE). The helical transmembrane segment at 411-433 (YTLAITIIGVPVGLPAVVTTTMA) threads the bilayer. Residues 434–805 (VGAAYLAKKK…LIIRNQLLNL (372 aa)) are Cytoplasmic-facing. Catalysis depends on aspartate 464, which acts as the 4-aspartylphosphate intermediate. Residues aspartate 720 and aspartate 724 each coordinate Mg(2+). The helical transmembrane segment at 806 to 824 (ELIVFIAIFADVATLAIAY) threads the bilayer. The Extracellular portion of the chain corresponds to 825 to 840 (DNAPYAMKPVKWNLPR). The chain crosses the membrane as a helical span at residues 841–860 (LWGLATIVGILLAIGTWIVN). At 861-912 (TTMIAQGQNRGIVQNFGVQDEVLFLQISLTENWLIFITRCSGPFWSSFPSWQ) the chain is on the cytoplasmic side. The chain crosses the membrane as a helical span at residues 913–933 (LSGAVLVVDILATLFCIFGWF). Residues 934-946 (KGGHQTSIVAVIR) are Extracellular-facing. The chain crosses the membrane as a helical span at residues 947-963 (IWMYSFGIFCLIAGVYY). The Cytoplasmic portion of the chain corresponds to 964-1010 (ILSESSSFDRWMHGKHKERGTTRKLEDFVMQLQRTSTHHEAEGKVTS).

The protein belongs to the cation transport ATPase (P-type) (TC 3.A.3) family. Type IIIA subfamily. In terms of processing, in addition to transient phosphorylation of the active site Asp residue, this protein, but not the product of the pma1 locus, is phosphorylated efficiently in isolated plasma membrane.

Its subcellular location is the cell membrane. The enzyme catalyses ATP + H2O + H(+)(in) = ADP + phosphate + 2 H(+)(out). Functionally, the plasma membrane ATPase of plants and fungi is a hydrogen ion pump. The proton gradient it generates drives the active transport of nutrients by H(+)-symport. The resulting external acidification and/or internal alkinization may mediate growth responses. This chain is Plasma membrane ATPase 2 (pma2), found in Schizosaccharomyces pombe (strain 972 / ATCC 24843) (Fission yeast).